Here is a 224-residue protein sequence, read N- to C-terminus: uncharacterized protein (224 aa).

This is an uncharacterized protein from Listeria monocytogenes serovar 1/2a (strain ATCC BAA-679 / EGD-e).